Here is a 546-residue protein sequence, read N- to C-terminus: MLRGPRCLYIYLFFVFLPFSFCYIRNNDNRFVYIVKSIRKGPNIKLRLTKDEKPNIDNHIIDYFKNVREHFPFFKENKSLIYFDSAATTHKPSCVIEKMSEFYKKENSNIHRGIYKLSHNATNNYEKVRETIKEYINCEKNDNIIFTNGSTYGLNVVCKMMIEEIIKKEEDEIYLSYMEHHSNIIPWQEYINKEKKGRIKYVPLNKSGYINIKKLISNMNINTKVISICHASNVIGNIQNIEKIIKKIKNVYPHIIIIIDASQSFAHIKYDIKKMKKNKSCPDILITSGHKFCASLGTGFIFINKELSSKYKFKPLLYGSNIITNVSKYKSKFVTSLSELLETGTQNIPGILSMGISLEFFKKINWNYVYQYEMYLYDLFIYYMNKYMKNHFVQLPNLNLSYKKENINYKSHMQTHPPVHKYNDEQNFTNDHNITQSKQTKSIHSQHDTFKIYTHDTRKYGLKKIGILPLWSNTFSSFDLVTFLDFKNICIRAGHHCASLLHKYYLKVPDTSRISIYFYNTPQEIKYLAQQIASTSFMLNEMKNEK.

The first 22 residues, 1–22, serve as a signal peptide directing secretion; sequence MLRGPRCLYIYLFFVFLPFSFC. Lys291 is subject to N6-(pyridoxal phosphate)lysine. The active-site Cysteine persulfide intermediate is Cys497.

Belongs to the class-V pyridoxal-phosphate-dependent aminotransferase family. Csd subfamily. As to quaternary structure, monomer. Interacts with SufE; interaction enhances cysteine desulfurase activity of SufS. Requires pyridoxal 5'-phosphate as cofactor. Proteolytically cleaved.

The protein localises to the plastid. The protein resides in the apicoplast. It carries out the reaction (sulfur carrier)-H + L-cysteine = (sulfur carrier)-SH + L-alanine. Its pathway is cofactor biosynthesis; iron-sulfur cluster biosynthesis. Catalyzes sulfur activation and mobilization in sulfur mobilization (SUF) pathway for iron-sulfur (Fe-S) cluster biogenesis. Active when in complex with a partner protein SufE. Required for apicoplast maintenance. Plays a role in the development of sporozoites in oocysts in mosquitoes. May provide sulfur for MNMA-mediated tRNA modifications. This chain is Cysteine desulfurase SufS, found in Plasmodium falciparum (isolate 3D7).